The chain runs to 56 residues: UPF0391 membrane protein Rru_A0119 (56 aa).

Helical transmembrane passes span tryptophan 4 to alanine 24 and isoleucine 30 to phenylalanine 50.

This sequence belongs to the UPF0391 family.

The protein resides in the cell membrane. This is UPF0391 membrane protein Rru_A0119 from Rhodospirillum rubrum (strain ATCC 11170 / ATH 1.1.1 / DSM 467 / LMG 4362 / NCIMB 8255 / S1).